Reading from the N-terminus, the 349-residue chain is tRNA pseudouridine synthase D (349 aa).

Phe27 serves as a coordination point for substrate. Asp80 functions as the Nucleophile in the catalytic mechanism. Residue Asn129 coordinates substrate. Residues 155 to 303 (GVPNYFGAQR…VEAARRAMLL (149 aa)) form the TRUD domain. Phe329 is a substrate binding site.

It belongs to the pseudouridine synthase TruD family.

The catalysed reaction is uridine(13) in tRNA = pseudouridine(13) in tRNA. Responsible for synthesis of pseudouridine from uracil-13 in transfer RNAs. This Escherichia coli (strain 55989 / EAEC) protein is tRNA pseudouridine synthase D.